We begin with the raw amino-acid sequence, 188 residues long: MTKMIVGLGNPGDKYEKTKHNMGFMALDLLAKELNVDFKEEKPFMSLVASTFVNGEKLFLVKPLTFMNESGRSVAPLLKYYNIDEADLTVMHDDLDSPVGRVRLRQKGSSGGQNGIKSVITHVGSQTFNRVKIGIGRPKHGMTVGNHVLSGFDNEDKEIAQDGIFKAVDAMKFYLENGDFQKTMNKFN.

Tyr15 contributes to the tRNA binding site. The active-site Proton acceptor is His20. TRNA-binding residues include Phe66, Asn68, and Asn114.

The protein belongs to the PTH family. Monomer.

Its subcellular location is the cytoplasm. The catalysed reaction is an N-acyl-L-alpha-aminoacyl-tRNA + H2O = an N-acyl-L-amino acid + a tRNA + H(+). Hydrolyzes ribosome-free peptidyl-tRNAs (with 1 or more amino acids incorporated), which drop off the ribosome during protein synthesis, or as a result of ribosome stalling. Functionally, catalyzes the release of premature peptidyl moieties from peptidyl-tRNA molecules trapped in stalled 50S ribosomal subunits, and thus maintains levels of free tRNAs and 50S ribosomes. This Lactococcus lactis subsp. lactis (strain IL1403) (Streptococcus lactis) protein is Peptidyl-tRNA hydrolase.